A 189-amino-acid polypeptide reads, in one-letter code: Adenylate kinase (189 aa).

11–16 (GSGKGT) is an ATP binding site. Positions 31–60 (STGDVLRAEIKNGTELGKTAKGYIDQGQLI) are NMP. AMP is bound by residues T32, R37, 58–60 (QLI), 86–89 (GFPR), and Q93. The interval 127–137 (KRGKDSGRADD) is LID. R128 contacts ATP. AMP-binding residues include R134 and R145. ATP is bound at residue G173.

It belongs to the adenylate kinase family. As to quaternary structure, monomer.

Its subcellular location is the cytoplasm. The enzyme catalyses AMP + ATP = 2 ADP. Its pathway is purine metabolism; AMP biosynthesis via salvage pathway; AMP from ADP: step 1/1. Functionally, catalyzes the reversible transfer of the terminal phosphate group between ATP and AMP. Plays an important role in cellular energy homeostasis and in adenine nucleotide metabolism. The protein is Adenylate kinase of Bacteroides thetaiotaomicron (strain ATCC 29148 / DSM 2079 / JCM 5827 / CCUG 10774 / NCTC 10582 / VPI-5482 / E50).